The primary structure comprises 133 residues: S-protein homolog 21 (133 aa).

An N-terminal signal peptide occupies residues 1 to 21; that stretch reads MKNLSIFLFVVGLCMISDVYG.

This sequence belongs to the plant self-incompatibility (S1) protein family.

It is found in the secreted. This is S-protein homolog 21 from Arabidopsis thaliana (Mouse-ear cress).